The sequence spans 188 residues: dCTP deaminase (188 aa).

Residues 111–116 (KSTYAR), 135–137 (TLE), Gln-156, Tyr-170, and Gln-180 each bind dCTP. Glu-137 acts as the Proton donor/acceptor in catalysis.

The protein belongs to the dCTP deaminase family. As to quaternary structure, homotrimer.

It catalyses the reaction dCTP + H2O + H(+) = dUTP + NH4(+). It functions in the pathway pyrimidine metabolism; dUMP biosynthesis; dUMP from dCTP (dUTP route): step 1/2. Its function is as follows. Catalyzes the deamination of dCTP to dUTP. The protein is dCTP deaminase of Marinobacter nauticus (strain ATCC 700491 / DSM 11845 / VT8) (Marinobacter aquaeolei).